The chain runs to 209 residues: tRNA (guanine-N(7)-)-methyltransferase (209 aa).

S-adenosyl-L-methionine-binding residues include Asp35, Glu60, Asn87, and Asp113. Asp113 is a catalytic residue. Residues Lys117 and Asp149 each coordinate substrate.

It belongs to the class I-like SAM-binding methyltransferase superfamily. TrmB family.

It catalyses the reaction guanosine(46) in tRNA + S-adenosyl-L-methionine = N(7)-methylguanosine(46) in tRNA + S-adenosyl-L-homocysteine. It functions in the pathway tRNA modification; N(7)-methylguanine-tRNA biosynthesis. Catalyzes the formation of N(7)-methylguanine at position 46 (m7G46) in tRNA. This Prochlorococcus marinus subsp. pastoris (strain CCMP1986 / NIES-2087 / MED4) protein is tRNA (guanine-N(7)-)-methyltransferase.